The primary structure comprises 388 residues: Succinate--CoA ligase [ADP-forming] subunit beta (388 aa).

Positions 9-244 constitute an ATP-grasp domain; it reads KQLFKEFGLP…PSQDDAREAE (236 aa). ATP-binding positions include Lys46, 53–55, Glu99, Thr102, and Glu107; that span reads GRG. Mg(2+) is bound by residues Asn199 and Asp213. Residues Asn264 and 321–323 each bind substrate; that span reads GIV.

This sequence belongs to the succinate/malate CoA ligase beta subunit family. In terms of assembly, heterotetramer of two alpha and two beta subunits. Requires Mg(2+) as cofactor.

The catalysed reaction is succinate + ATP + CoA = succinyl-CoA + ADP + phosphate. The enzyme catalyses GTP + succinate + CoA = succinyl-CoA + GDP + phosphate. It functions in the pathway carbohydrate metabolism; tricarboxylic acid cycle; succinate from succinyl-CoA (ligase route): step 1/1. Succinyl-CoA synthetase functions in the citric acid cycle (TCA), coupling the hydrolysis of succinyl-CoA to the synthesis of either ATP or GTP and thus represents the only step of substrate-level phosphorylation in the TCA. The beta subunit provides nucleotide specificity of the enzyme and binds the substrate succinate, while the binding sites for coenzyme A and phosphate are found in the alpha subunit. The polypeptide is Succinate--CoA ligase [ADP-forming] subunit beta (Idiomarina loihiensis (strain ATCC BAA-735 / DSM 15497 / L2-TR)).